The chain runs to 301 residues: CRISPR-associated endonuclease Cas1 (301 aa).

Mn(2+) is bound by residues Glu-133, His-200, and Asp-213.

It belongs to the CRISPR-associated endonuclease Cas1 family. Homodimer, forms a heterotetramer with a Cas2 homodimer. Mg(2+) serves as cofactor. It depends on Mn(2+) as a cofactor.

Functionally, CRISPR (clustered regularly interspaced short palindromic repeat), is an adaptive immune system that provides protection against mobile genetic elements (viruses, transposable elements and conjugative plasmids). CRISPR clusters contain spacers, sequences complementary to antecedent mobile elements, and target invading nucleic acids. CRISPR clusters are transcribed and processed into CRISPR RNA (crRNA). Acts as a dsDNA endonuclease. Involved in the integration of spacer DNA into the CRISPR cassette. This is CRISPR-associated endonuclease Cas1 from Clostridium sp. (strain SY8519).